Consider the following 146-residue polypeptide: Hemoglobin subunit beta (146 aa).

A Globin domain is found at 2 to 146 (QWAAEEKQLI…VAHALARKYH (145 aa)). The heme b site is built by histidine 63 and histidine 92.

Belongs to the globin family. As to quaternary structure, heterotetramer of two alpha chains and two beta chains. Red blood cells.

In terms of biological role, involved in oxygen transport from the lung to the various peripheral tissues. In Accipiter gentilis (Northern goshawk), this protein is Hemoglobin subunit beta (HBB).